The chain runs to 194 residues: MWLSPSLLLLILPGYSIAAKITGPTTVNGSEQGSLTVQCAYGSGWETYLKWRCQGADWNYCNILVKTNGSEQEVKKNRVSIRDNQKNHVFTVTMENLKRDDADSYWCGTERPGIDLGVKVQVTINPGTQTAVSEWTTTTASLAFTAAATQKTSSPLTRSPLKSTHFLFLFLLELPLLLSMLGTVLWVNRPQRRS.

Positions 1 to 18 (MWLSPSLLLLILPGYSIA) are cleaved as a signal peptide. The Ig-like V-type domain occupies 19-125 (AKITGPTTVN…LGVKVQVTIN (107 aa)). Residues 19-165 (AKITGPTTVN…LTRSPLKSTH (147 aa)) lie on the Extracellular side of the membrane. The N-linked (GlcNAc...) asparagine glycan is linked to N28. C39 and C107 are oxidised to a cystine. The helical transmembrane segment at 166 to 186 (FLFLFLLELPLLLSMLGTVLW) threads the bilayer. Over 187–194 (VNRPQRRS) the chain is Cytoplasmic.

This sequence belongs to the CD300 family. Forms complexes with the CD300 family members with exception of CD300c. Post-translationally, N-glycosylated. Expression seems restricted to cells of myeloid lineage.

Its subcellular location is the cell membrane. The protein is CMRF35-like molecule 5 (CD300LD) of Homo sapiens (Human).